Here is a 1409-residue protein sequence, read N- to C-terminus: Tensin-2 (1409 aa).

The interval 1–35 (MKSSGPVERLLRALGRRDSSRAASRPRKAEPHSFR) is disordered. Positions 9-20 (RLLRALGRRDSS) are enriched in basic and acidic residues. The Phorbol-ester/DAG-type zinc finger occupies 31 to 79 (PHSFREKVFRKKPPVCAVCKVTIDGTGVSCRVCKVATHRKCEAKVTSAC). At Thr91 the chain carries Phosphothreonine. A phosphoserine mark is found at Ser118 and Ser120. In terms of domain architecture, Phosphatase tensin-type spans 122–294 (DPLMERRWDL…SYFSGLLSGS (173 aa)). Cys231 functions as the Phosphocysteine intermediate in the catalytic mechanism. Positions 299 to 425 (SSPLFLHYVL…ASVEFVFSSS (127 aa)) constitute a C2 tensin-type domain. Residue Ser455 is modified to Phosphoserine. Tyr456 carries the post-translational modification Phosphotyrosine. Positions 462-536 (HHEDSVDGSL…SPGRPPPTAA (75 aa)) are disordered. The residue at position 466 (Ser466) is a Phosphoserine. Thr474 carries the post-translational modification Phosphothreonine. The residue at position 481 (Ser481) is a Phosphoserine. The residue at position 483 (Tyr483) is a Phosphotyrosine. The segment covering 491–506 (RQTPPAPSPEPPPPPM) has biased composition (pro residues). Position 555 is an omega-N-methylarginine (Arg555). Disordered stretches follow at residues 562 to 582 (AILD…GVYP), 812 to 1098 (PGEG…SSPA), and 1111 to 1130 (LSDN…QSNV). A phosphoserine mark is found at Ser820, Ser825, Ser830, Ser832, Ser835, and Ser845. 2 stretches are compositionally biased toward polar residues: residues 900 to 918 (SASS…SSPV) and 930 to 940 (RSPTSAPTQRL). Position 910 is a phosphothreonine (Thr910). A phosphoserine mark is found at Ser931, Ser941, and Ser972. A compositionally biased stretch (pro residues) spans 968 to 982 (PLAPSPVSPTFPPSS). Thr977 bears the Phosphothreonine mark. Residues Ser991 and Ser1003 each carry the phosphoserine modification. Over residues 1046–1056 (PEPPQSSPTPA) the composition is skewed to pro residues. In terms of domain architecture, SH2 spans 1140 to 1247 (WYKPHLSRDQ…SLPCCLRIPS (108 aa)). At Thr1182 the chain carries Phosphothreonine. Ser1247 carries the phosphoserine modification. The PTB domain occupies 1275-1408 (ACSVLYLTSV…FITKVLLGQR (134 aa)).

This sequence belongs to the PTEN phosphatase protein family. Interacts with AXL. Interacts with SYK; leading to its phosphorylation. Interacts with SQSTM1 (via PB1 domain); the interaction leads to sequestration of TNS2 in cytoplasmic aggregates with SQSTM1 and promotes TNS2 ubiquitination and proteasomal degradation. In terms of processing, ubiquitinated following sequestration in cytoplasmic aggregates with SQSTM1, leading to proteasomal degradation. Detected in heart, kidney, brain, thymus, spleen, liver, placenta, lung, skeletal muscle and small intestine.

The protein resides in the cell junction. It localises to the focal adhesion. The protein localises to the cell membrane. It is found in the cytoplasm. The catalysed reaction is O-phospho-L-tyrosyl-[protein] + H2O = L-tyrosyl-[protein] + phosphate. Its function is as follows. Tyrosine-protein phosphatase which regulates cell motility, proliferation and muscle-response to insulin. Phosphatase activity is mediated by binding to phosphatidylinositol-3,4,5-triphosphate (PtdIns(3,4,5)P3) via the SH2 domain. In muscles and under catabolic conditions, dephosphorylates IRS1 leading to its degradation and muscle atrophy. Negatively regulates PI3K-AKT pathway activation. Dephosphorylates nephrin NPHS1 in podocytes which regulates activity of the mTORC1 complex. Under normal glucose conditions, NPHS1 outcompetes IRS1 for binding to phosphatidylinositol 3-kinase (PI3K) which balances mTORC1 activity but high glucose conditions lead to up-regulation of TNS2, increased NPHS1 dephosphorylation and activation of mTORC1, contributing to podocyte hypertrophy and proteinuria. Required for correct podocyte morphology, podocyte-glomerular basement membrane interaction and integrity of the glomerular filtration barrier. Enhances RHOA activation in the presence of DLC1. Plays a role in promoting DLC1-dependent remodeling of the extracellular matrix. The sequence is that of Tensin-2 (TNS2) from Homo sapiens (Human).